A 942-amino-acid polypeptide reads, in one-letter code: Valine--tRNA ligase (942 aa).

A 'HIGH' region motif is present at residues 43-53; it reads PNVTGTLHMGH. Positions 551-555 match the 'KMSKS' region motif; it reads KMSKS. Position 554 (Lys554) interacts with ATP. Residues 876–942 adopt a coiled-coil conformation; sequence EGLVDLDAER…AGLREQRAKL (67 aa).

The protein belongs to the class-I aminoacyl-tRNA synthetase family. ValS type 1 subfamily. As to quaternary structure, monomer.

It localises to the cytoplasm. It carries out the reaction tRNA(Val) + L-valine + ATP = L-valyl-tRNA(Val) + AMP + diphosphate. Functionally, catalyzes the attachment of valine to tRNA(Val). As ValRS can inadvertently accommodate and process structurally similar amino acids such as threonine, to avoid such errors, it has a 'posttransfer' editing activity that hydrolyzes mischarged Thr-tRNA(Val) in a tRNA-dependent manner. The chain is Valine--tRNA ligase from Stenotrophomonas maltophilia (strain K279a).